Reading from the N-terminus, the 587-residue chain is Estrogen receptor (587 aa).

The tract at residues 1–176 is modulating (transactivation AF-1); the sequence is MTLHTKTSGV…SMESTKETRY (176 aa). NR C4-type zinc fingers lie at residues 177–197 and 213–237; these read CAVCNDYASGYHYGVWSCEGC and CPATNQCTIDKNRRKSCQACRLRKC. The segment at residues 177 to 242 is a DNA-binding region (nuclear receptor); it reads CAVCNDYASG…RLRKCYEVGM (66 aa). Residues 243 to 302 form a hinge region; the sequence is MKGGIRKDRRGGRVMKQKRQREEQDSRNGEASSTELRAPTLWASPLVVKHNKKNSPALSL. Residues 248–277 are disordered; sequence RKDRRGGRVMKQKRQREEQDSRNGEASSTE. Positions 249–261 are enriched in basic residues; the sequence is KDRRGGRVMKQKR. The region spanning 303 to 539 is the NR LBD domain; sequence TAEQMVSALL…DLLLEMLDAH (237 aa). The segment at 303-587 is transactivation AF-2; that stretch reads TAEQMVSALL…KEEENMQNTL (285 aa).

It belongs to the nuclear hormone receptor family. NR3 subfamily. As to quaternary structure, binds DNA as a homodimer. Can form a heterodimer with ER-beta.

It localises to the nucleus. In terms of biological role, the steroid hormones and their receptors are involved in the regulation of eukaryotic gene expression and affect cellular proliferation and differentiation in target tissues. This chain is Estrogen receptor (ESR1), found in Taeniopygia guttata (Zebra finch).